Consider the following 151-residue polypeptide: MSIVQNKKAFHDYFIEEKYEAGIVLEGWEVKAIRAGRAQLKEAYILIRKGELFLIGSHISPLATASTHVNPDPVKTRKLLLHASQIRELIGKVERAGYTLIPLDMHYKSGRIKLEIGLARGKKQYDKRETEKRKEWERDKQRLLRIRRSSD.

The protein belongs to the SmpB family.

The protein localises to the cytoplasm. Functionally, required for rescue of stalled ribosomes mediated by trans-translation. Binds to transfer-messenger RNA (tmRNA), required for stable association of tmRNA with ribosomes. tmRNA and SmpB together mimic tRNA shape, replacing the anticodon stem-loop with SmpB. tmRNA is encoded by the ssrA gene; the 2 termini fold to resemble tRNA(Ala) and it encodes a 'tag peptide', a short internal open reading frame. During trans-translation Ala-aminoacylated tmRNA acts like a tRNA, entering the A-site of stalled ribosomes, displacing the stalled mRNA. The ribosome then switches to translate the ORF on the tmRNA; the nascent peptide is terminated with the 'tag peptide' encoded by the tmRNA and targeted for degradation. The ribosome is freed to recommence translation, which seems to be the essential function of trans-translation. In Nitrosomonas europaea (strain ATCC 19718 / CIP 103999 / KCTC 2705 / NBRC 14298), this protein is SsrA-binding protein.